Consider the following 739-residue polypeptide: Probable beta-glucosidase L (739 aa).

An N-terminal signal peptide occupies residues 1 to 17 (MQNLFLSLLAAAVTVHA). Residue asparagine 224 is glycosylated (N-linked (GlcNAc...) asparagine). Aspartate 252 is a catalytic residue. N-linked (GlcNAc...) asparagine glycosylation is present at asparagine 398.

It belongs to the glycosyl hydrolase 3 family.

It is found in the secreted. The enzyme catalyses Hydrolysis of terminal, non-reducing beta-D-glucosyl residues with release of beta-D-glucose.. It functions in the pathway glycan metabolism; cellulose degradation. Beta-glucosidases are one of a number of cellulolytic enzymes involved in the degradation of cellulosic biomass. Catalyzes the last step releasing glucose from the inhibitory cellobiose. This Neosartorya fischeri (strain ATCC 1020 / DSM 3700 / CBS 544.65 / FGSC A1164 / JCM 1740 / NRRL 181 / WB 181) (Aspergillus fischerianus) protein is Probable beta-glucosidase L (bglL).